The primary structure comprises 147 residues: Prefoldin subunit alpha (147 aa).

This sequence belongs to the prefoldin alpha subunit family. Heterohexamer of two alpha and four beta subunits.

Its subcellular location is the cytoplasm. Its function is as follows. Molecular chaperone capable of stabilizing a range of proteins. Seems to fulfill an ATP-independent, HSP70-like function in archaeal de novo protein folding. In Methanocorpusculum labreanum (strain ATCC 43576 / DSM 4855 / Z), this protein is Prefoldin subunit alpha.